Consider the following 1402-residue polypeptide: MNGNSKVHTEENKNEHQQEGKGGEQEQEQINKHINKDTINNNNNNNNSMSMEMDINSVSVNSLSEPTPNEQQNNNNNNNSNGNGNGNDETTSSKTTTIINSNPLDTDTIMHLNNNDSSNNTTTTTIPRQSSSSIQNGIHKEENINQLTEIQLQPSLQIMDKEQQMNGIEESTTIATQTTLPTNNNNNNNNNNNNNNNNNNNNNNILEKESNGVQEIEDSPNHLSLKRKLMILEEMGLISDDNNKNNNNNSIDIPNSNRLNQIPSSYKTSLYICLYPIGYAIDNIYKDKIFTYNDKISKDFLNSISQGKLTPYIINILDQLSEQNDQKQQQQQQQQQQQQQQQQQQQQQQQQQQQTNNIYQNSNEITYYNGCIVVNIKDYRGFAENEQIAKTFNSKNMKPYPITVPIGTFKEFIEKRIILKPTMESLLFDIKKNCSTLNNDNKNNNINNINNINNNNNNNNNNNNNNNNNININNNNNINNYLNIKESEIVNEEYLLNFEKCLLHAITPQLELSVNPNCFFDQLETKQKQLYNQSHSLFSYKRFKPSDFIGLKYPVVYNNNNNNNNNNNKSYNNISNNNNNNVSNRFIKTHSISNIQERQQVNNNDLSTISTQQSPPTLIQTSAKRSIITLNTQINTTNSCLPNDNFSLFKFLNSNPKWVNERKSMLQYHSNINQTQSFPFNYQFNNNNNNNNNIPVNNNNNNVITQPPFGNGINTFSIKPSIMTKIPIECEQLNGRLLQFFSTSNLTVLTFECKAKPTGYELLMYVSETTQVLNTLISLRNLKFTAPSTSTSSSSSSGGTTTTTTATGTTPTTPTPVPLTQQQLIQQLISFSLNKPILPLNQQSPLAEASYVLDTQLPQPTYLSFPIGNSKQAHFLINHMKSCIEHEGHYILSYDSSFPDTISSQAQEIRKKAEYIHNQQQLNQQQQLQYHLQQQKQQQQQQQQQQQQQNQQQQQQNQQQQQNQQNQQQNQQQNQQQNQQQQQQQNQQNQQNQQNQQQNQQQQQQQNQQQQQNQQTQQQQTQQQIQQNQQQPTQQIQQQNQQQIQQNQQQLQQQQLQQQQQQIQQQQIQLQQQQIQQKQLQQLQQQQQQQQQQQQQQQQQQQQQQQQQQQQQQQQQQQQQQQQQQQQLQQTRNLQPQQIQTQPLQQPPNQMAQSMISPQSTPSTSPSPQQQYQTTPVLQAGVQPQSQLTIKQPIQQPLQPLQQPQPQPQQQQQQQQQQPPQPQPQPQQFAQHLQQQQMQRPQAQLQPPQILQQLQQQQQQQQQQLQPPQILQQQYQTLQPQQLILQQQIHEKQNIHQQMLLQQQRNQTNLQLLQQQAQQIPPNNPQLLQTNQQQQQFVTQQIQHQHQQLLQSQSIIQQLQLQLHQQQQLQQLQAQLQQQTSPNIIQQQQQQQQQQQQQQRIN.

7 disordered regions span residues 1-29, 60-107, 114-133, 177-206, 786-817, 1136-1174, and 1199-1250; these read MNGNSKVHTEENKNEHQQEGKGGEQEQEQ, VNSL…LDTD, NNDSSNNTTTTTIPRQSSSS, QTTLPTNNNNNNNNNNNNNNNNNNNNNNIL, APSTSTSSSSSSGGTTTTTTATGTTPTTPTPV, PQQIQTQPLQQPPNQMAQSMISPQSTPSTSPSPQQQYQT, and QPLQ…PPQI. Basic and acidic residues predominate over residues 7–29; that stretch reads VHTEENKNEHQQEGKGGEQEQEQ. Over residues 60-72 the composition is skewed to polar residues; that stretch reads VNSLSEPTPNEQQ. Positions 73 to 102 are enriched in low complexity; it reads NNNNNNNSNGNGNGNDETTSSKTTTIINSN. Low complexity-rich tracts occupy residues 183–204, 786–812, 1136–1150, 1157–1174, 1199–1218, and 1226–1250; these read NNNNNNNNNNNNNNNNNNNNNN, APSTSTSSSSSSGGTTTTTTATGTTPT, PQQIQTQPLQQPPNQ, SPQSTPSTSPSPQQQYQT, QPLQQPQPQPQQQQQQQQQQ, and PQQFAQHLQQQQMQRPQAQLQPPQI.

Belongs to the SPT20 family.

This is Transcription factor SPT20 homolog from Dictyostelium discoideum (Social amoeba).